The primary structure comprises 311 residues: Thioredoxin reductase (311 aa).

33-43 provides a ligand contact to FAD; it reads EGFFSGISGGQ. Cys-138 and Cys-141 are disulfide-bonded. Residue 283-292 participates in FAD binding; sequence DVQDKYYRQA.

The protein belongs to the class-II pyridine nucleotide-disulfide oxidoreductase family. In terms of assembly, homodimer. Requires FAD as cofactor.

The protein resides in the cytoplasm. It carries out the reaction [thioredoxin]-dithiol + NADP(+) = [thioredoxin]-disulfide + NADPH + H(+). This is Thioredoxin reductase (trxB) from Chlamydia pneumoniae (Chlamydophila pneumoniae).